The primary structure comprises 596 residues: DNA primase (596 aa).

The segment at 41–65 (CPFHHEKTPSFSVSQDKQIYKCFGC) adopts a CHC2-type zinc-finger fold. The region spanning 255-336 (DTIIIVEGYM…DIKIIKIPDG (82 aa)) is the Toprim domain. Residues E261, D305, and D307 each contribute to the Mg(2+) site.

This sequence belongs to the DnaG primase family. As to quaternary structure, monomer. Interacts with DnaB. Zn(2+) is required as a cofactor. The cofactor is Mg(2+).

The catalysed reaction is ssDNA + n NTP = ssDNA/pppN(pN)n-1 hybrid + (n-1) diphosphate.. Its function is as follows. RNA polymerase that catalyzes the synthesis of short RNA molecules used as primers for DNA polymerase during DNA replication. The polypeptide is DNA primase (Clostridium acetobutylicum (strain ATCC 824 / DSM 792 / JCM 1419 / IAM 19013 / LMG 5710 / NBRC 13948 / NRRL B-527 / VKM B-1787 / 2291 / W)).